The primary structure comprises 156 residues: Endoribonuclease YbeY (156 aa).

3 residues coordinate Zn(2+): His117, His121, and His127.

This sequence belongs to the endoribonuclease YbeY family. Zn(2+) serves as cofactor.

It localises to the cytoplasm. Single strand-specific metallo-endoribonuclease involved in late-stage 70S ribosome quality control and in maturation of the 3' terminus of the 16S rRNA. The chain is Endoribonuclease YbeY from Shewanella piezotolerans (strain WP3 / JCM 13877).